A 1551-amino-acid chain; its full sequence is MSIEKVPILGKETIHVGYGIQDHIVTEVVDNLASSTYVIVTDTNVEKTPQFSKLTNDFTKVLNEKRPDSRVLTYSVPPGENNKNRATKAAVEDFLLQQGCTRDTVIIAVGGGVIGDMIGFVAATFMRGVRVVQVPTTLLAMVDSSVGGKTAIDTPLGKNFIGAFHQPQYVFIDVSYLESLPTRQFINGMAEVVKTAAIWNEEEFTRLENFSKQFLSVVTAKNPDLLSIKEELVKTVLESVRVKAEVVSSDEKESSLRNLLNFGHTIGHAIEAIVTPEALHGECVSIGMIKEAELARYLGILPPVAVARLSKCLVAYGLPVTIDDKLFLQRVGPKRHNIEIDLLLKKMSIDKKNDGSKIRSVILESIGKCYQLKAHEVSKQDLTFVLTDEVLVHPFKQPPQENVITPPGSKSISNRALILAALGTGTVRIKNLLHSDDTKHMLAAVAALKGAEITTEDNGETIVLKGNGGDLVTCDEELYLGNAGTASRFLTTVASLVGKSESNDHVVLTGNARMQERPIGPLVDALRSNGSEVQYLNKEGSLPLKITAGNGLKGGRIELAATISSQYVSSILMCAPYAKEPVTLALVGGKPISQLYIDMTCAMMKSFGIEVTKSTTEDYTYHIPKGTYKNPAEYVIESDASSATYPLAFAAMTGTSCTVPNIGSSSLQGDARFAVDVLKPMGCKVEQTATSTTVTGPPRGQLKPLPHVDMEPMTDAFLTASVVAAVAQGDSSTTITGIANQRVKECNRIEAMITELAKFGVKADELPDGIEIHGIDIADLKTPSIEKRGVCSYDDHRVAMSFSLLSGLCKEPVLILERSTTGKTWPGWWDILHSKFNIELDGYEPPFGTDKEGTKASDKSIIIIGMRGTGKSTLSEWLASFMGFKSLDMDVYLEEKLGNDIKSLIKEKGWEYFREQEAAIAKECFSKFSKGYVLSTGGGIVEGAENRQRLKDYITAGGIVLHLHRDLEETVSFLSVDTTRPAYTSEVKEVWLRREQWYDDCSNYHFYSSHCNTEEEFDHLRKSFVNFIKIITGTEKASIPSGRSAALSLTVPDLNAISSQLGDIAVGAEAVELRVDLLKETSSSFIADQIAVIRKHIDLPIIYTVRTESQGGKFPDNKVEELRNLLLLGVKLGVAFIDVELTAPVEVIEEIIIKKGYTRVIASYNDIAGKLGWSNVEWTNKYNQGVSINADIVKLIGRASSLQDNLELEVFRKQNTLKPLLAVNLGSQGKLSQVLNTIFTPITQESLPNEDGLLTIKEINQIYFDIGGLTAKKFWVIGSPIQHSRSPNLHNAAYKALNLPFTFDRFESTDADQVYKELINKPDFGGLAITMPLKLDIMKYATELSDAAQKIGAVNTLVPLEGGYLGDNTDWVGITSSFTRAGVPPNPRVNGLVIGAGGTSRAAIYALHQIGCEKIYLANRTTSKLNEIKDSFPKEYNLEVLETEDQAEKAQNVGLAVSCVPADKPLDESLLQKVEKILANGEKSSNGFKSTLLEASYKPRVTPMMKIADEKFKWRAIPGVEMLVNQGDRQFQIHTGFTAPYDVIHRAVVEE.

Residues Met1–Lys379 form a 3-dehydroquinate synthase region. NAD(+) is bound by residues Asp42–Asn44, Glu80–Lys83, Gly111–Val113, and Asp116. Arg127 contributes to the 7-phospho-2-dehydro-3-deoxy-D-arabino-heptonate binding site. Residue Thr136–Thr137 participates in NAD(+) binding. 7-phospho-2-dehydro-3-deoxy-D-arabino-heptonate contacts are provided by Asp143 and Lys149. Residue Lys158 participates in NAD(+) binding. Asn159 is a binding site for 7-phospho-2-dehydro-3-deoxy-D-arabino-heptonate. Residues Tyr176–Ser179 and Asn187 each bind NAD(+). Glu191 is a Zn(2+) binding site. Residues Glu191 to Lys194 and Lys243 each bind 7-phospho-2-dehydro-3-deoxy-D-arabino-heptonate. The active-site Proton acceptor; for 3-dehydroquinate synthase activity is the Glu253. 7-phospho-2-dehydro-3-deoxy-D-arabino-heptonate-binding positions include Arg257–Asn261 and His264. His264 serves as a coordination point for Zn(2+). Residue His268 is the Proton acceptor; for 3-dehydroquinate synthase activity of the active site. 7-phospho-2-dehydro-3-deoxy-D-arabino-heptonate contacts are provided by His280 and Lys351. Residue His280 coordinates Zn(2+). Positions Val392–Ile838 are EPSP synthase. Positions Asp858–Ser1048 are shikimate kinase. Position 865-872 (Gly865–Ser872) interacts with ATP. Residues Leu1049–Glu1258 are 3-dehydroquinase. The Schiff-base intermediate with substrate; for 3-dehydroquinate dehydratase activity role is filled by Lys1194. The tract at residues Ala1271–Glu1551 is shikimate dehydrogenase.

This sequence in the N-terminal section; belongs to the sugar phosphate cyclases superfamily. Dehydroquinate synthase family. It in the 2nd section; belongs to the EPSP synthase family. The protein in the 3rd section; belongs to the shikimate kinase family. In the 4th section; belongs to the type-I 3-dehydroquinase family. This sequence in the C-terminal section; belongs to the shikimate dehydrogenase family. Homodimer. Zn(2+) is required as a cofactor.

It localises to the cytoplasm. It carries out the reaction 7-phospho-2-dehydro-3-deoxy-D-arabino-heptonate = 3-dehydroquinate + phosphate. The catalysed reaction is 3-dehydroquinate = 3-dehydroshikimate + H2O. It catalyses the reaction shikimate + NADP(+) = 3-dehydroshikimate + NADPH + H(+). The enzyme catalyses shikimate + ATP = 3-phosphoshikimate + ADP + H(+). It carries out the reaction 3-phosphoshikimate + phosphoenolpyruvate = 5-O-(1-carboxyvinyl)-3-phosphoshikimate + phosphate. Its pathway is metabolic intermediate biosynthesis; chorismate biosynthesis; chorismate from D-erythrose 4-phosphate and phosphoenolpyruvate: step 2/7. It functions in the pathway metabolic intermediate biosynthesis; chorismate biosynthesis; chorismate from D-erythrose 4-phosphate and phosphoenolpyruvate: step 3/7. It participates in metabolic intermediate biosynthesis; chorismate biosynthesis; chorismate from D-erythrose 4-phosphate and phosphoenolpyruvate: step 4/7. The protein operates within metabolic intermediate biosynthesis; chorismate biosynthesis; chorismate from D-erythrose 4-phosphate and phosphoenolpyruvate: step 5/7. Its pathway is metabolic intermediate biosynthesis; chorismate biosynthesis; chorismate from D-erythrose 4-phosphate and phosphoenolpyruvate: step 6/7. Functionally, the AROM polypeptide catalyzes 5 consecutive enzymatic reactions in prechorismate polyaromatic amino acid biosynthesis. The protein is Pentafunctional AROM polypeptide of Candida tropicalis (strain ATCC MYA-3404 / T1) (Yeast).